The primary structure comprises 242 residues: Probable 2-phosphosulfolactate phosphatase (242 aa).

This sequence belongs to the ComB family. Requires Mg(2+) as cofactor.

It carries out the reaction (2R)-O-phospho-3-sulfolactate + H2O = (2R)-3-sulfolactate + phosphate. This chain is Probable 2-phosphosulfolactate phosphatase, found in Caldicellulosiruptor saccharolyticus (strain ATCC 43494 / DSM 8903 / Tp8T 6331).